The following is a 206-amino-acid chain: Adenine phosphoribosyltransferase (206 aa).

This sequence belongs to the purine/pyrimidine phosphoribosyltransferase family. In terms of assembly, homodimer.

The protein resides in the cytoplasm. The catalysed reaction is AMP + diphosphate = 5-phospho-alpha-D-ribose 1-diphosphate + adenine. The protein operates within purine metabolism; AMP biosynthesis via salvage pathway; AMP from adenine: step 1/1. In terms of biological role, catalyzes a salvage reaction resulting in the formation of AMP, that is energically less costly than de novo synthesis. The polypeptide is Adenine phosphoribosyltransferase (Rhodopirellula baltica (strain DSM 10527 / NCIMB 13988 / SH1)).